The chain runs to 340 residues: Ketol-acid reductoisomerase (NADP(+)) (340 aa).

Positions 3-182 constitute a KARI N-terminal Rossmann domain; it reads VQMEYEKDVK…GAARVGLLET (180 aa). NADP(+) contacts are provided by residues 26–29, R49, S53, and 83–86; these read YGSQ and DEIQ. The active site involves H108. Residue G134 participates in NADP(+) binding. In terms of domain architecture, KARI C-terminal knotted spans 183-328; the sequence is TYKEETEEDL…AELRKAMPFV (146 aa). The Mg(2+) site is built by D191, E195, E227, and E231. Substrate is bound at residue S252.

It belongs to the ketol-acid reductoisomerase family. The cofactor is Mg(2+).

It catalyses the reaction (2R)-2,3-dihydroxy-3-methylbutanoate + NADP(+) = (2S)-2-acetolactate + NADPH + H(+). The catalysed reaction is (2R,3R)-2,3-dihydroxy-3-methylpentanoate + NADP(+) = (S)-2-ethyl-2-hydroxy-3-oxobutanoate + NADPH + H(+). It participates in amino-acid biosynthesis; L-isoleucine biosynthesis; L-isoleucine from 2-oxobutanoate: step 2/4. It functions in the pathway amino-acid biosynthesis; L-valine biosynthesis; L-valine from pyruvate: step 2/4. Functionally, involved in the biosynthesis of branched-chain amino acids (BCAA). Catalyzes an alkyl-migration followed by a ketol-acid reduction of (S)-2-acetolactate (S2AL) to yield (R)-2,3-dihydroxy-isovalerate. In the isomerase reaction, S2AL is rearranged via a Mg-dependent methyl migration to produce 3-hydroxy-3-methyl-2-ketobutyrate (HMKB). In the reductase reaction, this 2-ketoacid undergoes a metal-dependent reduction by NADPH to yield (R)-2,3-dihydroxy-isovalerate. The sequence is that of Ketol-acid reductoisomerase (NADP(+)) from Streptococcus thermophilus (strain CNRZ 1066).